The chain runs to 136 residues: Large-conductance mechanosensitive channel (136 aa).

2 consecutive transmembrane segments (helical) span residues 9–29 (AFAS…GAAF) and 79–99 (IQTV…LKAI).

The protein belongs to the MscL family. In terms of assembly, homopentamer.

Its subcellular location is the cell inner membrane. Functionally, channel that opens in response to stretch forces in the membrane lipid bilayer. May participate in the regulation of osmotic pressure changes within the cell. This Shewanella putrefaciens (strain CN-32 / ATCC BAA-453) protein is Large-conductance mechanosensitive channel.